Reading from the N-terminus, the 119-residue chain is Large ribosomal subunit protein bL12 (119 aa).

The protein belongs to the bacterial ribosomal protein bL12 family. As to quaternary structure, homodimer. Part of the ribosomal stalk of the 50S ribosomal subunit. Forms a multimeric L10(L12)X complex, where L10 forms an elongated spine to which 2 to 4 L12 dimers bind in a sequential fashion. Binds GTP-bound translation factors.

Its function is as follows. Forms part of the ribosomal stalk which helps the ribosome interact with GTP-bound translation factors. Is thus essential for accurate translation. The protein is Large ribosomal subunit protein bL12 of Colwellia psychrerythraea (strain 34H / ATCC BAA-681) (Vibrio psychroerythus).